The sequence spans 477 residues: Aryl-phospho-beta-D-glucosidase BglC (477 aa).

The Proton donor role is filled by glutamate 170. Residue glutamate 378 is the Nucleophile of the active site.

Belongs to the glycosyl hydrolase 1 family.

It catalyses the reaction 6-phospho-beta-D-glucosyl-(1-&gt;4)-D-glucose + H2O = D-glucose 6-phosphate + D-glucose. In terms of biological role, is able to catalyze the hydrolysis of aryl-phospho-beta-D-glucosides such as 4-methylumbelliferyl-phospho-beta-D-glucopyranoside (MUG-P), phosphoarbutin and phosphosalicin. Is not essential for growth on arbutin and salicin as the sole carbon source. The sequence is that of Aryl-phospho-beta-D-glucosidase BglC (bglC) from Bacillus subtilis (strain 168).